The primary structure comprises 460 residues: Bifunctional protein GlmU (460 aa).

The segment at 1 to 229 (MTNYAIILAA…FNESLGVNDR (229 aa)) is pyrophosphorylase. UDP-N-acetyl-alpha-D-glucosamine contacts are provided by residues 8–11 (LAAG), lysine 22, glutamine 72, and 77–78 (GT). Aspartate 102 contacts Mg(2+). The UDP-N-acetyl-alpha-D-glucosamine site is built by glycine 139, glutamate 154, asparagine 169, and asparagine 227. Asparagine 227 provides a ligand contact to Mg(2+). A linker region spans residues 230-250 (VALATAETVMRQRITQKHMVN). Residues 251–460 (GVTFQNPETV…RLAHHPSRSK (210 aa)) form an N-acetyltransferase region. 2 residues coordinate UDP-N-acetyl-alpha-D-glucosamine: arginine 332 and lysine 350. The active-site Proton acceptor is histidine 362. Residues tyrosine 365 and asparagine 376 each contribute to the UDP-N-acetyl-alpha-D-glucosamine site. Acetyl-CoA-binding positions include alanine 379, 385–386 (NY), serine 404, alanine 422, and arginine 439.

This sequence in the N-terminal section; belongs to the N-acetylglucosamine-1-phosphate uridyltransferase family. In the C-terminal section; belongs to the transferase hexapeptide repeat family. As to quaternary structure, homotrimer. The cofactor is Mg(2+).

It is found in the cytoplasm. It catalyses the reaction alpha-D-glucosamine 1-phosphate + acetyl-CoA = N-acetyl-alpha-D-glucosamine 1-phosphate + CoA + H(+). It carries out the reaction N-acetyl-alpha-D-glucosamine 1-phosphate + UTP + H(+) = UDP-N-acetyl-alpha-D-glucosamine + diphosphate. Its pathway is nucleotide-sugar biosynthesis; UDP-N-acetyl-alpha-D-glucosamine biosynthesis; N-acetyl-alpha-D-glucosamine 1-phosphate from alpha-D-glucosamine 6-phosphate (route II): step 2/2. It functions in the pathway nucleotide-sugar biosynthesis; UDP-N-acetyl-alpha-D-glucosamine biosynthesis; UDP-N-acetyl-alpha-D-glucosamine from N-acetyl-alpha-D-glucosamine 1-phosphate: step 1/1. The protein operates within bacterial outer membrane biogenesis; LPS lipid A biosynthesis. In terms of biological role, catalyzes the last two sequential reactions in the de novo biosynthetic pathway for UDP-N-acetylglucosamine (UDP-GlcNAc). The C-terminal domain catalyzes the transfer of acetyl group from acetyl coenzyme A to glucosamine-1-phosphate (GlcN-1-P) to produce N-acetylglucosamine-1-phosphate (GlcNAc-1-P), which is converted into UDP-GlcNAc by the transfer of uridine 5-monophosphate (from uridine 5-triphosphate), a reaction catalyzed by the N-terminal domain. This is Bifunctional protein GlmU from Streptococcus pyogenes serotype M18 (strain MGAS8232).